Reading from the N-terminus, the 630-residue chain is Tyrosinase (630 aa).

Cu cation is bound by residues H69, H92, H101, H317, H321, and H360. Residues 90–92 constitute a cross-link (2'-(S-cysteinyl)-histidine (Cys-His)); the sequence is CVH.

Belongs to the tyrosinase family. Cu(2+) serves as cofactor.

The enzyme catalyses 2 L-dopa + O2 = 2 L-dopaquinone + 2 H2O. The catalysed reaction is L-tyrosine + O2 = L-dopaquinone + H2O. In terms of biological role, this is a copper-containing oxidase that functions in the formation of pigments such as melanins and other polyphenolic compounds. The polypeptide is Tyrosinase (tyr1) (Aspergillus fumigatus (strain ATCC MYA-4609 / CBS 101355 / FGSC A1100 / Af293) (Neosartorya fumigata)).